A 228-amino-acid chain; its full sequence is Urease accessory protein UreF (228 aa).

It belongs to the UreF family. UreD, UreF and UreG form a complex that acts as a GTP-hydrolysis-dependent molecular chaperone, activating the urease apoprotein by helping to assemble the nickel containing metallocenter of UreC. The UreE protein probably delivers the nickel.

It is found in the cytoplasm. Its function is as follows. Required for maturation of urease via the functional incorporation of the urease nickel metallocenter. This is Urease accessory protein UreF from Yersinia pseudotuberculosis serotype IB (strain PB1/+).